The primary structure comprises 128 residues: Sulfurtransferase TusD (128 aa).

Catalysis depends on cysteine 78, which acts as the Cysteine persulfide intermediate.

The protein belongs to the DsrE/TusD family. In terms of assembly, heterohexamer, formed by a dimer of trimers. The hexameric TusBCD complex contains 2 copies each of TusB, TusC and TusD. The TusBCD complex interacts with TusE.

It is found in the cytoplasm. Part of a sulfur-relay system required for 2-thiolation of 5-methylaminomethyl-2-thiouridine (mnm(5)s(2)U) at tRNA wobble positions. Accepts sulfur from TusA and transfers it in turn to TusE. In Escherichia coli (strain 55989 / EAEC), this protein is Sulfurtransferase TusD.